The sequence spans 266 residues: 22 kDa alpha-zein 14 (266 aa).

The first 21 residues, 1 to 21 (MATKILSLLALLALFASATNA), serve as a signal peptide directing secretion.

It belongs to the zein family.

Its function is as follows. Zeins are major seed storage proteins. The chain is 22 kDa alpha-zein 14 from Zea mays (Maize).